The following is a 282-amino-acid chain: Pantothenate synthetase (282 aa).

30-37 (MGNLHDGH) is an ATP binding site. The active-site Proton donor is the histidine 37. Residue glutamine 61 coordinates (R)-pantoate. Position 61 (glutamine 61) interacts with beta-alanine. Residue 149–152 (GNKD) participates in ATP binding. Glutamine 155 provides a ligand contact to (R)-pantoate. ATP contacts are provided by residues alanine 178 and 186-189 (MSSR).

This sequence belongs to the pantothenate synthetase family. Homodimer.

The protein resides in the cytoplasm. The enzyme catalyses (R)-pantoate + beta-alanine + ATP = (R)-pantothenate + AMP + diphosphate + H(+). The protein operates within cofactor biosynthesis; (R)-pantothenate biosynthesis; (R)-pantothenate from (R)-pantoate and beta-alanine: step 1/1. Functionally, catalyzes the condensation of pantoate with beta-alanine in an ATP-dependent reaction via a pantoyl-adenylate intermediate. The sequence is that of Pantothenate synthetase from Marinomonas sp. (strain MWYL1).